We begin with the raw amino-acid sequence, 242 residues long: MIVFPAIDLKGGEVVRLAEGDMDRATVYGDNPAAQAMLFAEAGAEHLHVVDLDGAFAGESRNREAVEAIVAEFPGYVQLGGGIRDATAVEGWFNLGVARIVIGSAALKDPDFVKEMAREWENGIVVAVDARDGMIATEGWAEVSDVPVADMARRFEDAGVASLLFTDIGRDGLLKGCNIDATVELARQTDMPVIASGGVKGLDDIHVLSLHAHEGIEGVITGRALYEGRLDLAAAIAMGARS.

Asp-8 serves as the catalytic Proton acceptor. The active-site Proton donor is the Asp-129.

The protein belongs to the HisA/HisF family.

The protein resides in the cytoplasm. It carries out the reaction 1-(5-phospho-beta-D-ribosyl)-5-[(5-phospho-beta-D-ribosylamino)methylideneamino]imidazole-4-carboxamide = 5-[(5-phospho-1-deoxy-D-ribulos-1-ylimino)methylamino]-1-(5-phospho-beta-D-ribosyl)imidazole-4-carboxamide. It participates in amino-acid biosynthesis; L-histidine biosynthesis; L-histidine from 5-phospho-alpha-D-ribose 1-diphosphate: step 4/9. This is 1-(5-phosphoribosyl)-5-[(5-phosphoribosylamino)methylideneamino] imidazole-4-carboxamide isomerase from Erythrobacter litoralis (strain HTCC2594).